A 560-amino-acid chain; its full sequence is Nuclear receptor subfamily 5 group A member 2 (560 aa).

The interval glycine 17–isoleucine 54 is disordered. Basic and acidic residues predominate over residues histidine 31–aspartate 48. Residues glutamate 104–alanine 179 constitute a DNA-binding region (nuclear receptor). 8 residues coordinate Zn(2+): cysteine 107, cysteine 110, cysteine 124, cysteine 127, cysteine 143, cysteine 149, cysteine 159, and cysteine 162. 2 consecutive NR C4-type zinc fingers follow at residues cysteine 107–cysteine 127 and cysteine 143–cysteine 162. The interval lysine 173–lysine 188 is C-terminal extension (CTE). The FTZ-F1 box motif lies at phenylalanine 189–arginine 208. Residue lysine 289 forms a Glycyl lysine isopeptide (Lys-Gly) (interchain with G-Cter in SUMO1) linkage. An NR LBD domain is found at serine 319–lysine 558. The a phospholipid derivative site is built by tyrosine 535 and lysine 539. The interval tyrosine 547 to lysine 558 is AF-2.

The protein belongs to the nuclear hormone receptor family. NR5 subfamily. Monomer; Binds DNA as a monomer. Interacts with nuclear receptor corepressors NR0B1 and NR0B2; repressing NR5A2 nuclear receptor activity. Interacts with nuclear receptor coactivators CTNNB1, PPARGC1A and NCOA2; interaction takes place following ligand-binding and promotes target gene activation. Interacts (when sumoylated) with GPS2; interaction with GPS2 onto hepatic acute phase protein promoters prevents N-Cor corepressor complex dissociation. Interacts with HNF1A. Interacts with GRIP1. In terms of processing, sumoylated by SUMO1 at Lys-289 during the hepatic acute phase response, leading to promote interaction with GPS2 and prevent N-Cor corepressor complex dissociation.

Its subcellular location is the nucleus. It localises to the chromosome. In terms of biological role, orphan nuclear receptor that binds DNA as a monomer to the 5'-TCAAGGCCA-3' sequence and controls expression of target genes: regulates key biological processes, such as early embryonic development, cholesterol and bile acid synthesis pathways, as well as liver and pancreas morphogenesis. Ligand-binding causes conformational change which causes recruitment of coactivators, promoting target gene activation. The specific ligand is unknown, but specific phospholipids, such as phosphatidylethanolamine, phosphatidylserine, dilauroyl phosphatidylcholine and diundecanoyl phosphatidylcholine can act as ligand in vitro. Acts as a pioneer transcription factor, which unwraps target DNA from histones and elicits local opening of closed chromatin. Plays a central role during preimplantation stages of embryonic development. Plays a minor role in zygotic genome activation (ZGA) by regulating a small set of two-cell stage genes. Plays a major role in morula development (2-16 cells embryos) by acting as a master regulator at the 8-cell stage, controlling expression of lineage-specifying transcription factors and genes involved in mitosis, telomere maintenance and DNA repair. Zygotic NR5A2 binds to both closed and open chromatin with other transcription factors, often at SINE B1/Alu repeats DNA elements, promoting chromatin accessibility at nearby regulatory regions. Also involved in the epiblast stage of development and embryonic stem cell pluripotency, by promoting expression of POU5F1/OCT4. Regulates other processes later in development, such as formation of connective tissue in lower jaw and middle ear, neural stem cell differentiation, ovarian follicle development and Sertoli cell differentiation. Involved in exocrine pancreas development and acinar cell differentiation. Acts as an essential transcriptional regulator of lipid metabolism. Key regulator of cholesterol 7-alpha-hydroxylase gene (CYP7A) expression in liver. Also acts as a negative regulator of inflammation in different organs, such as, liver and pancreas. Protects against intestinal inflammation via its ability to regulate glucocorticoid production. Plays an anti-inflammatory role during the hepatic acute phase response by acting as a corepressor: inhibits the hepatic acute phase response by preventing dissociation of the N-Cor corepressor complex. Acts as a regulator of immunity by promoting lymphocyte T-cell development, proliferation and effector functions. Also involved in resolution of endoplasmic reticulum stress in the liver. The chain is Nuclear receptor subfamily 5 group A member 2 from Rattus norvegicus (Rat).